A 553-amino-acid chain; its full sequence is Protein TIC 55, chloroplastic (553 aa).

A chloroplast-targeting transit peptide spans Met-1–Ala-60. The Stromal segment spans residues Ala-61–Gln-492. One can recognise a Rieske domain in the interval Trp-103–Val-208. Cys-144, His-146, Cys-163, and His-166 together coordinate [2Fe-2S] cluster. 2 residues coordinate Fe cation: His-257 and His-262. A helical transmembrane segment spans residues Ile-493–Ser-513. Residues Gly-514 to Lys-518 are Chloroplast intermembrane-facing. A helical membrane pass occupies residues Val-519–Ile-539. The Stromal portion of the chain corresponds to Ala-540–Leu-553.

As to quaternary structure, part of the Tic complex. Interacts with TIC62 and TIC110. Requires [2Fe-2S] cluster as cofactor.

It localises to the plastid. The protein resides in the chloroplast inner membrane. In terms of biological role, involved in protein precursor import into chloroplasts. Part of the redox regulon consisting of TIC32, TIC 55 and TIC62. The chain is Protein TIC 55, chloroplastic (TIC55) from Pisum sativum (Garden pea).